We begin with the raw amino-acid sequence, 96 residues long: Large ribosomal subunit protein bL27 (96 aa).

The interval 13-33 (KGGGSTANGRNSAGRRLGAKA) is disordered.

It belongs to the bacterial ribosomal protein bL27 family.

The sequence is that of Large ribosomal subunit protein bL27 from Lactobacillus acidophilus (strain ATCC 700396 / NCK56 / N2 / NCFM).